Consider the following 397-residue polypeptide: F-box protein At3g28330 (397 aa).

The F-box domain occupies 6-56; the sequence is KKDMDFLTEDLWEIILARLPLKSIITTPKLVCKVWKSIIESRCFRDLFQSL.

This chain is F-box protein At3g28330, found in Arabidopsis thaliana (Mouse-ear cress).